Reading from the N-terminus, the 496-residue chain is Glycylpeptide N-tetradecanoyltransferase 1 (496 aa).

The tract at residues 1-82 is disordered; the sequence is MADESETAVK…SAQDQPVKMN (82 aa). Ser31 and Ser47 each carry phosphoserine. The span at 55–66 shows a compositional bias: basic residues; it reads KKKKKKQKKKKE. The residue at position 83 (Ser83) is a Phosphoserine. Tetradecanoyl-CoA-binding residues include Gln118, Phe119, Trp120, Phe247, Leu248, Cys249, Val250, Ser256, Arg258, Val259, and Ala260.

The protein belongs to the NMT family.

The protein resides in the cytoplasm. Its subcellular location is the cytosol. The protein localises to the membrane. It catalyses the reaction N-terminal glycyl-[protein] + tetradecanoyl-CoA = N-tetradecanoylglycyl-[protein] + CoA + H(+). The catalysed reaction is N-terminal glycyl-L-lysyl-[protein] + tetradecanoyl-CoA = N-terminal glycyl-(N(6)-tetradecanoyl)-L-lysyl-[protein] + CoA + H(+). Adds a myristoyl group to the N-terminal glycine residue of certain cellular and viral proteins. Also able to mediate N-terminal lysine myristoylation of proteins: catalyzes myristoylation of ARF6 on both 'Gly-2' and 'Lys-3'. Lysine myristoylation is required to maintain ARF6 on membranes during the GTPase cycle. This is Glycylpeptide N-tetradecanoyltransferase 1 (NMT1) from Pongo abelii (Sumatran orangutan).